Here is an 887-residue protein sequence, read N- to C-terminus: Kinesin-like protein KIF20A (887 aa).

Ser-2 bears the N-acetylserine mark. A phosphoserine mark is found at Ser-7, Ser-14, and Ser-21. Residues 63 to 506 (KVKVYLRIRP…AKFSALASQL (444 aa)) enclose the Kinesin motor domain. 159–166 (GVTNSGKT) lines the ATP pocket. Residue Ser-527 is modified to Phosphoserine; by PLK1. The interval 527–553 (SPQVGPGLEKEDKADSDLEDSPEDEAD) is disordered. The segment covering 543 to 553 (DLEDSPEDEAD) has biased composition (acidic residues). A coiled-coil region spans residues 559-804 (KEELLQVVEA…VLVKLDLQKK (246 aa)). Ser-683 and Ser-823 each carry phosphoserine. The interval 805 to 887 (AACIAEQYHT…LLKSPFGKKY (83 aa)) is globular. The tract at residues 826–875 (KRLGANQENQQPNHQPPGKKPFLRNLLPRTPTCQSSTDSSPYARILRSRH) is disordered. Thr-855 carries the post-translational modification Phosphothreonine. Residues 856–865 (PTCQSSTDSS) show a composition bias toward polar residues. 3 positions are modified to phosphoserine: Ser-865, Ser-876, and Ser-881.

This sequence belongs to the TRAFAC class myosin-kinesin ATPase superfamily. Kinesin family. In terms of processing, phosphorylated by PLK1 at Ser-527 during mitosis, creating a docking site for PLK1 and recruiting PLK1 at central spindle. In terms of tissue distribution, ubiquitously expressed, with highest levels in spleen and testis.

Its subcellular location is the golgi apparatus. The protein localises to the cytoplasm. It localises to the cytoskeleton. The protein resides in the spindle. Its function is as follows. Mitotic kinesin required for chromosome passenger complex (CPC)-mediated cytokinesis. Following phosphorylation by PLK1, involved in recruitment of PLK1 to the central spindle. Interacts with guanosine triphosphate (GTP)-bound forms of RAB6A and RAB6B. May act as a motor required for the retrograde RAB6 regulated transport of Golgi membranes and associated vesicles along microtubules. Has a microtubule plus end-directed motility. The chain is Kinesin-like protein KIF20A (Kif20a) from Mus musculus (Mouse).